Consider the following 513-residue polypeptide: Bifunctional pantoate ligase/cytidylate kinase (513 aa).

The segment at 1 to 282 (MGTFHRLTTT…VGQTRLIDNC (282 aa)) is pantoate--beta-alanine ligase. 32 to 39 (MGALHGGH) contributes to the ATP binding site. His39 functions as the Proton donor in the catalytic mechanism. Residue Gln63 coordinates (R)-pantoate. Beta-alanine is bound at residue Gln63. ATP is bound at residue 152-155 (GQKD). Gln158 contributes to the (R)-pantoate binding site. ATP contacts are provided by residues Val181 and 189-192 (LSSR). Residues 283–513 (LLDRRRPILA…HLYRSRFPQP (231 aa)) are cytidylate kinase.

The protein in the N-terminal section; belongs to the pantothenate synthetase family. It in the C-terminal section; belongs to the cytidylate kinase family. Type 1 subfamily.

Its subcellular location is the cytoplasm. It catalyses the reaction (R)-pantoate + beta-alanine + ATP = (R)-pantothenate + AMP + diphosphate + H(+). It carries out the reaction CMP + ATP = CDP + ADP. The enzyme catalyses dCMP + ATP = dCDP + ADP. The protein operates within cofactor biosynthesis; (R)-pantothenate biosynthesis; (R)-pantothenate from (R)-pantoate and beta-alanine: step 1/1. Catalyzes the condensation of pantoate with beta-alanine in an ATP-dependent reaction via a pantoyl-adenylate intermediate. In terms of biological role, catalyzes the transfer of a phosphate group from ATP to either CMP or dCMP to form CDP or dCDP and ADP, respectively. This is Bifunctional pantoate ligase/cytidylate kinase from Thermosynechococcus vestitus (strain NIES-2133 / IAM M-273 / BP-1).